The following is a 1011-amino-acid chain: Protein translocase subunit SecA (1011 aa).

ATP contacts are provided by residues Gln-87, 105–109, and Asp-500; that span reads GEGKT. The segment at 969–1011 is disordered; sequence SLPLGANPAPARPQPAVMQEQECPCGSGKPFNKCHGGEDEATA. The Zn(2+) site is built by Cys-991, Cys-993, Cys-1002, and His-1003.

Belongs to the SecA family. Monomer and homodimer. Part of the essential Sec protein translocation apparatus which comprises SecA, SecYEG and auxiliary proteins SecDF-YajC and YidC. Requires Zn(2+) as cofactor.

The protein localises to the cell inner membrane. The protein resides in the cytoplasm. The enzyme catalyses ATP + H2O + cellular proteinSide 1 = ADP + phosphate + cellular proteinSide 2.. In terms of biological role, part of the Sec protein translocase complex. Interacts with the SecYEG preprotein conducting channel. Has a central role in coupling the hydrolysis of ATP to the transfer of proteins into and across the cell membrane, serving as an ATP-driven molecular motor driving the stepwise translocation of polypeptide chains across the membrane. This chain is Protein translocase subunit SecA, found in Sorangium cellulosum (strain So ce56) (Polyangium cellulosum (strain So ce56)).